The primary structure comprises 225 residues: Viral late gene transcription factor 3 (225 aa).

A zinc finger spans residues 7–27; the sequence is CSNCKHNGLITESNHEFCIFC.

This sequence belongs to the nucleo-cytoplasmic large DNA viruses (NCLDVs) VLTF-3 family. Interacts with the late transcription elongation factor H5/VLTF-4. Interacts with the late transcription factors VLTF-1.

Its function is as follows. Acts with RNA polymerase to initiate transcription from late gene promoters. The protein is Viral late gene transcription factor 3 (VLTF3) of Fowlpox virus (strain NVSL) (FPV).